We begin with the raw amino-acid sequence, 427 residues long: Zinc finger protein DPF3 (427 aa).

The disordered stretch occupies residues 182 to 244; it reads LENDENADEV…NDAASQDDHD (63 aa). Over residues 184-199 the composition is skewed to acidic residues; it reads NDENADEVNEEEDLEE. A compositionally biased stretch (basic and acidic residues) spans 233–244; that stretch reads RRNDAASQDDHD. The segment at 247–270 adopts a C2H2-type zinc-finger fold; sequence YVCDICGKRYKNRPGLSYHYAHTH. Positions 272 to 301 are disordered; the sequence is ASEEGDEAREQETRSSPVHRNENHKPQKGP. Residues 279 to 296 are compositionally biased toward basic and acidic residues; it reads AREQETRSSPVHRNENHK. PHD-type zinc fingers lie at residues 308 to 368 and 365 to 415; these read NNYC…CKSC and CKSC…CREL.

It belongs to the requiem/DPF family. As to quaternary structure, component of the BAF complex. Interacts with acetylated histones H3 and H4. Component of neuron-specific chromatin remodeling complex (nBAF complex), a subfamily of ATP-dependent SWI/SNF chromatin remodeling complexes. In terms of tissue distribution, expressed in the heart and somites.

Its subcellular location is the nucleus. In terms of biological role, muscle-specific component of the BAF complex, a multiprotein complex involved in transcriptional activation and repression of select genes by chromatin remodeling (alteration of DNA-nucleosome topology). Specifically binds acetylated lysines on histone 3 and 4. In the complex, it acts as a tissue-specific anchor between histone acetylations and methylations and chromatin remodeling. It thereby probably plays an essential role in heart and skeletal muscle development. Belongs to the neuron-specific chromatin remodeling complex (nBAF complex) and plays a role in neural development. The protein is Zinc finger protein DPF3 (DPF3) of Gallus gallus (Chicken).